The primary structure comprises 204 residues: Crossover junction endodeoxyribonuclease RuvC (204 aa).

Active-site residues include Asp-7, Glu-68, and Asp-141. Asp-7, Glu-68, and Asp-141 together coordinate Mg(2+). Residues Gln-164 to Ala-204 are disordered.

This sequence belongs to the RuvC family. As to quaternary structure, homodimer which binds Holliday junction (HJ) DNA. The HJ becomes 2-fold symmetrical on binding to RuvC with unstacked arms; it has a different conformation from HJ DNA in complex with RuvA. In the full resolvosome a probable DNA-RuvA(4)-RuvB(12)-RuvC(2) complex forms which resolves the HJ. Mg(2+) serves as cofactor.

Its subcellular location is the cytoplasm. The enzyme catalyses Endonucleolytic cleavage at a junction such as a reciprocal single-stranded crossover between two homologous DNA duplexes (Holliday junction).. The RuvA-RuvB-RuvC complex processes Holliday junction (HJ) DNA during genetic recombination and DNA repair. Endonuclease that resolves HJ intermediates. Cleaves cruciform DNA by making single-stranded nicks across the HJ at symmetrical positions within the homologous arms, yielding a 5'-phosphate and a 3'-hydroxyl group; requires a central core of homology in the junction. The consensus cleavage sequence is 5'-(A/T)TT(C/G)-3'. Cleavage occurs on the 3'-side of the TT dinucleotide at the point of strand exchange. HJ branch migration catalyzed by RuvA-RuvB allows RuvC to scan DNA until it finds its consensus sequence, where it cleaves and resolves the cruciform DNA. The polypeptide is Crossover junction endodeoxyribonuclease RuvC (Streptomyces griseus subsp. griseus (strain JCM 4626 / CBS 651.72 / NBRC 13350 / KCC S-0626 / ISP 5235)).